Reading from the N-terminus, the 479-residue chain is Aspartyl/glutamyl-tRNA(Asn/Gln) amidotransferase subunit B (479 aa).

This sequence belongs to the GatB/GatE family. GatB subfamily. In terms of assembly, heterotrimer of A, B and C subunits.

It carries out the reaction L-glutamyl-tRNA(Gln) + L-glutamine + ATP + H2O = L-glutaminyl-tRNA(Gln) + L-glutamate + ADP + phosphate + H(+). The catalysed reaction is L-aspartyl-tRNA(Asn) + L-glutamine + ATP + H2O = L-asparaginyl-tRNA(Asn) + L-glutamate + ADP + phosphate + 2 H(+). Its function is as follows. Allows the formation of correctly charged Asn-tRNA(Asn) or Gln-tRNA(Gln) through the transamidation of misacylated Asp-tRNA(Asn) or Glu-tRNA(Gln) in organisms which lack either or both of asparaginyl-tRNA or glutaminyl-tRNA synthetases. The reaction takes place in the presence of glutamine and ATP through an activated phospho-Asp-tRNA(Asn) or phospho-Glu-tRNA(Gln). The chain is Aspartyl/glutamyl-tRNA(Asn/Gln) amidotransferase subunit B from Deinococcus radiodurans (strain ATCC 13939 / DSM 20539 / JCM 16871 / CCUG 27074 / LMG 4051 / NBRC 15346 / NCIMB 9279 / VKM B-1422 / R1).